Here is a 209-residue protein sequence, read N- to C-terminus: Large ribosomal subunit protein uL3 (209 aa).

Gln150 is subject to N5-methylglutamine.

Belongs to the universal ribosomal protein uL3 family. As to quaternary structure, part of the 50S ribosomal subunit. Forms a cluster with proteins L14 and L19. Post-translationally, methylated by PrmB.

Its function is as follows. One of the primary rRNA binding proteins, it binds directly near the 3'-end of the 23S rRNA, where it nucleates assembly of the 50S subunit. The sequence is that of Large ribosomal subunit protein uL3 from Vibrio campbellii (strain ATCC BAA-1116).